We begin with the raw amino-acid sequence, 482 residues long: MAAALVLRTWSRAAGQLICVRYFQTCGNVHVLKPKYVCFFGYPPFKYSHPYQWLKTTAALQGQIVQFKLSDIGEGIREVTVKEWYVKEGDTVSQFDSICEVQSDKASVTITSRYDGVIKKLYYNLDDTAYVGKPLVDIETEALKDSEEDVVETPAVSHDEHTHQEIKGQKTLATPAVRRLAMENNIKLSEVIGSGKDGRILKEDILNYLEKQTGAILPPSPKAEIMPPPPKPKDRTIPIPISKPPVFIGKDRTEPVKGFHKAMVKTMSAALKIPHFGYCDEVDLTELVKLREELKPIAFARGIKLSFMPFFLKAASLGLLQFPILNASVDENCQNITYKASHNIGIAMDTEQGLIVPNVKNVQIRSIFEIATELNRLQKLGSAGQLSTNDLIGGTFTLSNIGSIGGTYAKPVILPPEVAIGALGTIKALPRFNEKGEVCKAQIMNVSWSADHRIIDGATVSRFSNLWKSYLENPAFMLLDLK.

The transit peptide at 1 to 61 (MAAALVLRTW…QWLKTTAALQ (61 aa)) directs the protein to the mitochondrion. A Lipoyl-binding domain is found at 64 to 139 (IVQFKLSDIG…YVGKPLVDIE (76 aa)). The residue at position 105 (lysine 105) is an N6-lipoyllysine. Lysine 133 bears the N6-succinyllysine mark. Residues 145-160 (DSEEDVVETPAVSHDE) form a critical for association with PPM1K region. The disordered stretch occupies residues 146–171 (SEEDVVETPAVSHDEHTHQEIKGQKT). Residues 157-168 (SHDEHTHQEIKG) are compositionally biased toward basic and acidic residues. The Peripheral subunit-binding (PSBD) domain occupies 172–209 (LATPAVRRLAMENNIKLSEVIGSGKDGRILKEDILNYL). The residue at position 196 (lysine 196) is an N6-acetyllysine; alternate. An N6-succinyllysine; alternate modification is found at lysine 196. The residue at position 202 (lysine 202) is an N6-acetyllysine. Over residues 218 to 230 (PPSPKAEIMPPPP) the composition is skewed to pro residues. Residues 218–238 (PPSPKAEIMPPPPKPKDRTIP) are disordered. A Phosphoserine modification is found at serine 220. An N6-acetyllysine mark is found at lysine 243 and lysine 250. Lysine 261 carries the N6-succinyllysine modification. An N6-acetyllysine; alternate modification is found at lysine 289. Lysine 289 is subject to N6-succinyllysine; alternate. Arginine 291 is a binding site for CoA. Residues lysine 295 and lysine 304 each carry the N6-acetyllysine modification. The CoA site is built by serine 306, aspartate 349, glutamine 378, serine 399, asparagine 400, serine 403, glycine 424, and isoleucine 426. At lysine 435 the chain carries N6-acetyllysine. Residue lysine 440 is modified to N6-acetyllysine; alternate. N6-succinyllysine; alternate is present on lysine 440. Catalysis depends on residues histidine 452 and aspartate 456.

This sequence belongs to the 2-oxoacid dehydrogenase family. As to quaternary structure, forms a 24-polypeptide structural core with octahedral symmetry that represents the E2 component of the branched-chain alpha-ketoacid dehydrogenase (BCKDH) complex. The BCKDH complex is composed of three major building blocks E1, E2 and E3. It is organized around E2, a 24-meric cubic core composed of DBT, to which are associated 6 to 12 copies of E1, and approximately 6 copies of the dehydrogenase E3, a DLD dimer. Interacts with PPM1K with a 24:1 stoichiometry; the N-terminal region (residues 49-61) of PPM1K and C-terminal linker of the lipoyl domain of DBT/E2 (residues 145-160) are critical for this interaction whereas the lipoyl prosthetic group is dispensable. This interaction requires colocalization in mitochondria. PPM1K competes with BCKDK for binding to DBT; this interaction is modulated by branched-chain alpha-keto acids (BCKAs). At steady state, BCKDH holoenzyme preferentially binds BCKDK and BCKDHA is phosphorylated. In response to high levels of BCKAs, BCKDK is replaced by PPM1K leading to BCKDHA dephosphorylation. The cofactor is (R)-lipoate. Expressed in kidney (at protein level).

It is found in the mitochondrion matrix. The enzyme catalyses N(6)-[(R)-dihydrolipoyl]-L-lysyl-[protein] + 2-methylpropanoyl-CoA = N(6)-[(R)-S(8)-2-methylpropanoyldihydrolipoyl]-L-lysyl-[protein] + CoA. Functionally, the branched-chain alpha-keto dehydrogenase complex catalyzes the overall conversion of alpha-keto acids to acyl-CoA and CO(2). It contains multiple copies of three enzymatic components: branched-chain alpha-keto acid decarboxylase (E1), lipoamide acyltransferase (E2) and lipoamide dehydrogenase (E3). Within this complex, the catalytic function of this enzyme is to accept, and to transfer to coenzyme A, acyl groups that are generated by the branched-chain alpha-keto acid decarboxylase component. This Bos taurus (Bovine) protein is Lipoamide acyltransferase component of branched-chain alpha-keto acid dehydrogenase complex, mitochondrial (DBT).